The following is a 1073-amino-acid chain: Carbamoyl phosphate synthase large chain (1073 aa).

The segment at 2 to 403 is carboxyphosphate synthetic domain; it reads PKRTDIKSIL…SLQKALRGLE (402 aa). 12 residues coordinate ATP: Arg-129, Arg-169, Gly-175, Gly-176, Glu-208, Leu-210, Glu-215, Gly-241, Ile-242, His-243, Gln-285, and Glu-299. Residues 133-328 enclose the ATP-grasp 1 domain; it reads DVAMKKIGLE…IAKVAAKLAV (196 aa). Mg(2+) is bound by residues Gln-285, Glu-299, and Asn-301. Residues Gln-285, Glu-299, and Asn-301 each coordinate Mn(2+). An oligomerization domain region spans residues 404 to 553; that stretch reads VGATGFDPKV…YSTYEEECEA (150 aa). The interval 554 to 936 is carbamoyl phosphate synthetic domain; sequence NPSTDREKIM…AFAKAQLGSN (383 aa). The ATP-grasp 2 domain occupies 679–870; the sequence is QHAVERLKLK…LAKVAARVMA (192 aa). 10 residues coordinate ATP: Arg-715, His-754, Leu-756, Glu-761, Gly-786, Val-787, His-788, Ser-789, Gln-829, and Glu-841. Residues Gln-829, Glu-841, and Asn-843 each coordinate Mg(2+). Mn(2+) contacts are provided by Gln-829, Glu-841, and Asn-843. Residues 937–1073 enclose the MGS-like domain; the sequence is STMKKHGRAL…SVQEMHAQIK (137 aa). Residues 937–1073 are allosteric domain; sequence STMKKHGRAL…SVQEMHAQIK (137 aa).

The protein belongs to the CarB family. Composed of two chains; the small (or glutamine) chain promotes the hydrolysis of glutamine to ammonia, which is used by the large (or ammonia) chain to synthesize carbamoyl phosphate. Tetramer of heterodimers (alpha,beta)4. It depends on Mg(2+) as a cofactor. Requires Mn(2+) as cofactor.

It carries out the reaction hydrogencarbonate + L-glutamine + 2 ATP + H2O = carbamoyl phosphate + L-glutamate + 2 ADP + phosphate + 2 H(+). The catalysed reaction is hydrogencarbonate + NH4(+) + 2 ATP = carbamoyl phosphate + 2 ADP + phosphate + 2 H(+). The protein operates within amino-acid biosynthesis; L-arginine biosynthesis; carbamoyl phosphate from bicarbonate: step 1/1. Its pathway is pyrimidine metabolism; UMP biosynthesis via de novo pathway; (S)-dihydroorotate from bicarbonate: step 1/3. Functionally, large subunit of the glutamine-dependent carbamoyl phosphate synthetase (CPSase). CPSase catalyzes the formation of carbamoyl phosphate from the ammonia moiety of glutamine, carbonate, and phosphate donated by ATP, constituting the first step of 2 biosynthetic pathways, one leading to arginine and/or urea and the other to pyrimidine nucleotides. The large subunit (synthetase) binds the substrates ammonia (free or transferred from glutamine from the small subunit), hydrogencarbonate and ATP and carries out an ATP-coupled ligase reaction, activating hydrogencarbonate by forming carboxy phosphate which reacts with ammonia to form carbamoyl phosphate. This Escherichia coli O6:H1 (strain CFT073 / ATCC 700928 / UPEC) protein is Carbamoyl phosphate synthase large chain.